The sequence spans 299 residues: Regucalcin (299 aa).

E18 contacts a divalent metal cation. Residues R101, N103, and E121 each coordinate substrate. K144 carries the post-translational modification N6-succinyllysine. A divalent metal cation is bound by residues N154 and D204. D204 (proton donor/acceptor) is an active-site residue. N6-succinyllysine is present on residues K244 and K253.

It belongs to the SMP-30/CGR1 family. Monomer. Zn(2+) serves as cofactor. It depends on Mn(2+) as a cofactor. Requires Ca(2+) as cofactor. The cofactor is Mg(2+).

The protein resides in the cytoplasm. The enzyme catalyses D-glucono-1,5-lactone + H2O = D-gluconate + H(+). In terms of biological role, gluconolactonase with low activity towards other sugar lactones, including gulonolactone and galactonolactone. Can also hydrolyze diisopropyl phosphorofluoridate and phenylacetate (in vitro). Calcium-binding protein. Modulates Ca(2+) signaling, and Ca(2+)-dependent cellular processes and enzyme activities. The chain is Regucalcin (RGN) from Macaca fascicularis (Crab-eating macaque).